The sequence spans 704 residues: mRNA (2'-O-methyladenosine-N(6)-)-methyltransferase (704 aa).

A disordered region spans residues 1 to 33 (MANENHGSPREEASLLSHSPGTSNQSQPCSPKP). The segment covering 16–29 (LSHSPGTSNQSQPC) has biased composition (polar residues). Serine 30 is subject to Phosphoserine. Positions 43–77 (ELVHAGWEKCWSRRENRPYYFNRFTNQSLWEMPVL) constitute a WW domain. The segment at 88–151 (GLNATPLPQD…PSSPSIPGTP (64 aa)) is disordered. The short motif at 109 to 113 (KPRKR) is the Nuclear localization signal element. The residue at position 116 (serine 116) is a Phosphoserine. A compositionally biased stretch (polar residues) spans 136 to 149 (PTGQSVPSSPSIPG). Threonine 152 carries the post-translational modification Phosphothreonine. Residues arginine 235 and arginine 265 each coordinate substrate. 553 to 556 (NPPF) provides a ligand contact to S-adenosyl-L-methionine. Substrate-binding positions include glutamate 558 and 588-592 (WREPP). 614 to 616 (FEH) lines the S-adenosyl-L-methionine pocket. Positions 663–704 (LSAAYRQSGRSHSSGSSSSSSSEAKDRDSGREQGPSREPHPT) are disordered. The Nuclear localization signal motif lies at 669-684 (QSGRSHSSGSSSSSSS). The span at 670–684 (SGRSHSSGSSSSSSS) shows a compositional bias: low complexity. Over residues 685-704 (EAKDRDSGREQGPSREPHPT) the composition is skewed to basic and acidic residues.

This sequence belongs to the CAPAM family. In terms of assembly, interacts with POLR2A; interacts with the phosphorylated C-terminal domain (CTD) of POLR2A. Ubiquitous.

The protein localises to the nucleus. The enzyme catalyses a 5'-end (N(7)-methyl 5'-triphosphoguanosine)-(2'-O-methyladenosine) in mRNA + S-adenosyl-L-methionine = a 5'-end (N(7)-methyl 5'-triphosphoguanosine)-(N(6),2'-O-dimethyladenosine) in mRNA + S-adenosyl-L-homocysteine + H(+). Its activity is regulated as follows. Cap-specific adenosine methyltransferase activity is inhibited by zinc. Its function is as follows. Cap-specific adenosine methyltransferase that catalyzes formation of N(6),2'-O-dimethyladenosine cap (m6A(m)) by methylating the adenosine at the second transcribed position of capped mRNAs. Recruited to the early elongation complex of RNA polymerase II (RNAPII) via interaction with POLR2A and mediates formation of m6A(m) co-transcriptionally. This is mRNA (2'-O-methyladenosine-N(6)-)-methyltransferase from Homo sapiens (Human).